The sequence spans 414 residues: Gamma-glutamyl phosphate reductase (414 aa).

Belongs to the gamma-glutamyl phosphate reductase family.

The protein resides in the cytoplasm. The catalysed reaction is L-glutamate 5-semialdehyde + phosphate + NADP(+) = L-glutamyl 5-phosphate + NADPH + H(+). The protein operates within amino-acid biosynthesis; L-proline biosynthesis; L-glutamate 5-semialdehyde from L-glutamate: step 2/2. Catalyzes the NADPH-dependent reduction of L-glutamate 5-phosphate into L-glutamate 5-semialdehyde and phosphate. The product spontaneously undergoes cyclization to form 1-pyrroline-5-carboxylate. The polypeptide is Gamma-glutamyl phosphate reductase (Geobacillus kaustophilus (strain HTA426)).